Here is a 367-residue protein sequence, read N- to C-terminus: MMKKRNTVYLSEDLIVEILSRVSAVSLARLRTTSKRWNALVKDERLAKKHSAYAPRQSLVITLIDSRVYLMNVSLQYGIEKVDLSAKLTGQFSLKDPLSNSLEEVDIRNVFHCDGLLLCSTKDNRLVVWNPCSGETRWIQPRSSYKVSDIYALGYDNTSSCHKILRMDRSEDRIPIQTEYQVYDFTSKSWLVDGVAGGLFIPSIGTRRRGLSVKGNTYWLALTEDGPPFDMFLLCFDFSTDGFRRLSLPTDTPCTYYDVSLSVTREEQQLCMFKSHGSELWIATKMESTGAISWSKSHRFHFRIDEMTVLADQEKPVFVYRFKPKSNMLHIVGEHIYIIQVDQHSADSKCPYLLTYVPSLVQIQQSI.

The F-box domain occupies 4–50; sequence KRNTVYLSEDLIVEILSRVSAVSLARLRTTSKRWNALVKDERLAKKH.

The protein is Putative F-box protein At3g21130 of Arabidopsis thaliana (Mouse-ear cress).